We begin with the raw amino-acid sequence, 65 residues long: MPKIKTVRGAAKRFKKTGAGGFKRKHANLRHILTKKATKRKRHLRPKGMVSKNDLGLVVACLPYA.

The protein belongs to the bacterial ribosomal protein bL35 family.

The protein is Large ribosomal subunit protein bL35 of Yersinia enterocolitica serotype O:8 / biotype 1B (strain NCTC 13174 / 8081).